The primary structure comprises 136 residues: Large ribosomal subunit protein uL16 (136 aa).

It belongs to the universal ribosomal protein uL16 family. In terms of assembly, part of the 50S ribosomal subunit.

Functionally, binds 23S rRNA and is also seen to make contacts with the A and possibly P site tRNAs. The chain is Large ribosomal subunit protein uL16 from Rickettsia bellii (strain OSU 85-389).